The chain runs to 80 residues: Cell division protein ZapB (80 aa).

Residues 3–80 (FEVLEQLESK…ALLGKMDEVE (78 aa)) are a coiled coil.

Belongs to the ZapB family. As to quaternary structure, homodimer. The ends of the coiled-coil dimer bind to each other, forming polymers. Interacts with FtsZ.

It is found in the cytoplasm. In terms of biological role, non-essential, abundant cell division factor that is required for proper Z-ring formation. It is recruited early to the divisome by direct interaction with FtsZ, stimulating Z-ring assembly and thereby promoting cell division earlier in the cell cycle. Its recruitment to the Z-ring requires functional FtsA or ZipA. This Vibrio parahaemolyticus serotype O3:K6 (strain RIMD 2210633) protein is Cell division protein ZapB.